A 569-amino-acid chain; its full sequence is Potassium-transporting ATPase potassium-binding subunit (569 aa).

Transmembrane regions (helical) follow at residues 3-23 (LMEY…SPVL), 68-88 (AASL…VLML), 136-156 (VGLA…AVAV), 179-199 (VLYV…GQGV), 259-279 (LQML…GGAV), 284-304 (HAWT…CSLY), 384-404 (GLYG…LMVG), 422-442 (AMLA…VAAV), 490-510 (IALA…GVAG), and 534-554 (LLLT…ALAL).

The protein belongs to the KdpA family. In terms of assembly, the system is composed of three essential subunits: KdpA, KdpB and KdpC.

The protein localises to the cell inner membrane. Functionally, part of the high-affinity ATP-driven potassium transport (or Kdp) system, which catalyzes the hydrolysis of ATP coupled with the electrogenic transport of potassium into the cytoplasm. This subunit binds the periplasmic potassium ions and delivers the ions to the membrane domain of KdpB through an intramembrane tunnel. The chain is Potassium-transporting ATPase potassium-binding subunit from Nitratidesulfovibrio vulgaris (strain ATCC 29579 / DSM 644 / CCUG 34227 / NCIMB 8303 / VKM B-1760 / Hildenborough) (Desulfovibrio vulgaris).